The following is a 375-amino-acid chain: Probable trehalose-phosphate phosphatase 7 (375 aa).

This sequence belongs to the trehalose phosphatase family. It depends on a divalent metal cation as a cofactor.

It carries out the reaction alpha,alpha-trehalose 6-phosphate + H2O = alpha,alpha-trehalose + phosphate. It functions in the pathway glycan biosynthesis; trehalose biosynthesis. Removes the phosphate from trehalose 6-phosphate to produce free trehalose. Trehalose accumulation in plant may improve abiotic stress tolerance. The sequence is that of Probable trehalose-phosphate phosphatase 7 (TPP7) from Oryza sativa subsp. japonica (Rice).